The sequence spans 285 residues: tRNA pseudouridine synthase B (285 aa).

Catalysis depends on Asp38, which acts as the Nucleophile.

Belongs to the pseudouridine synthase TruB family. Type 1 subfamily.

The catalysed reaction is uridine(55) in tRNA = pseudouridine(55) in tRNA. Its function is as follows. Responsible for synthesis of pseudouridine from uracil-55 in the psi GC loop of transfer RNAs. This chain is tRNA pseudouridine synthase B, found in Geobacillus kaustophilus (strain HTA426).